The chain runs to 395 residues: Glutamyl-tRNA reductase (395 aa).

Substrate is bound by residues 45–48, Ser87, 92–94, and Gln98; these read TCNR and EDQ. Residue Cys46 is the Nucleophile of the active site. An NADP(+)-binding site is contributed by 167 to 172; the sequence is GAGEMG.

This sequence belongs to the glutamyl-tRNA reductase family. In terms of assembly, homodimer.

The enzyme catalyses (S)-4-amino-5-oxopentanoate + tRNA(Glu) + NADP(+) = L-glutamyl-tRNA(Glu) + NADPH + H(+). The protein operates within porphyrin-containing compound metabolism; protoporphyrin-IX biosynthesis; 5-aminolevulinate from L-glutamyl-tRNA(Glu): step 1/2. In terms of biological role, catalyzes the NADPH-dependent reduction of glutamyl-tRNA(Glu) to glutamate 1-semialdehyde (GSA). This is Glutamyl-tRNA reductase from Methanosphaera stadtmanae (strain ATCC 43021 / DSM 3091 / JCM 11832 / MCB-3).